Consider the following 418-residue polypeptide: Tyrosine--tRNA ligase (418 aa).

Residue Tyr-34 coordinates L-tyrosine. Residues 39–48 (PTADSLHLGH) carry the 'HIGH' region motif. Tyr-169 and Gln-173 together coordinate L-tyrosine. The 'KMSKS' region signature appears at 229–233 (KFGKS). An ATP-binding site is contributed by Lys-232. The 67-residue stretch at 352-418 (LNLVDMLVTA…GKKKYAVLTY (67 aa)) folds into the S4 RNA-binding domain.

Belongs to the class-I aminoacyl-tRNA synthetase family. TyrS type 1 subfamily. Homodimer.

Its subcellular location is the cytoplasm. It catalyses the reaction tRNA(Tyr) + L-tyrosine + ATP = L-tyrosyl-tRNA(Tyr) + AMP + diphosphate + H(+). Functionally, catalyzes the attachment of tyrosine to tRNA(Tyr) in a two-step reaction: tyrosine is first activated by ATP to form Tyr-AMP and then transferred to the acceptor end of tRNA(Tyr). In Streptococcus pyogenes serotype M18 (strain MGAS8232), this protein is Tyrosine--tRNA ligase.